The chain runs to 241 residues: Small ribosomal subunit protein uS2 (241 aa).

Belongs to the universal ribosomal protein uS2 family.

This Escherichia coli (strain 55989 / EAEC) protein is Small ribosomal subunit protein uS2.